The sequence spans 382 residues: Sulfate adenylyltransferase (382 aa).

It belongs to the sulfate adenylyltransferase family.

The catalysed reaction is sulfate + ATP + H(+) = adenosine 5'-phosphosulfate + diphosphate. It participates in sulfur metabolism; hydrogen sulfide biosynthesis; sulfite from sulfate: step 1/3. This chain is Sulfate adenylyltransferase, found in Staphylothermus marinus (strain ATCC 43588 / DSM 3639 / JCM 9404 / F1).